The following is a 72-amino-acid chain: Sec-independent protein translocase protein TatA (72 aa).

Residues 1-21 form a helical membrane-spanning segment; that stretch reads MLGGISIWQLLIVLAILVLIF.

Belongs to the TatA/E family. In terms of assembly, the Tat system comprises two distinct complexes: a TatABC complex, containing multiple copies of TatA, TatB and TatC subunits, and a separate TatA complex, containing only TatA subunits. Substrates initially bind to the TatABC complex, which probably triggers association of the separate TatA complex to form the active translocon.

Its subcellular location is the cell inner membrane. In terms of biological role, part of the twin-arginine translocation (Tat) system that transports large folded proteins containing a characteristic twin-arginine motif in their signal peptide across membranes. TatA could form the protein-conducting channel of the Tat system. The polypeptide is Sec-independent protein translocase protein TatA (Marinomonas sp. (strain MWYL1)).